Here is a 427-residue protein sequence, read N- to C-terminus: Endothelin-1 receptor (427 aa).

Residues methionine 1 to alanine 20 form the signal peptide. At aspartate 21–lysine 80 the chain is on the extracellular side. N-linked (GlcNAc...) asparagine glycans are attached at residues asparagine 29 and asparagine 62. The chain crosses the membrane as a helical span at residues tyrosine 81–leucine 102. The Cytoplasmic portion of the chain corresponds to arginine 103–arginine 112. A helical membrane pass occupies residues asparagine 113–isoleucine 132. The Extracellular portion of the chain corresponds to aspartate 133–lysine 159. Cysteine 158 and cysteine 239 are oxidised to a cystine. The chain crosses the membrane as a helical span at residues leucine 160 to valine 181. Over aspartate 182–glutamate 205 the chain is Cytoplasmic. A helical transmembrane segment spans residues isoleucine 206 to phenylalanine 229. Residues glutamate 230–aspartate 256 lie on the Extracellular side of the membrane. Asparagine 242 carries N-linked (GlcNAc...) asparagine glycosylation. A helical transmembrane segment spans residues tryptophan 257 to methionine 278. Over threonine 279–lysine 306 the chain is Cytoplasmic. A helical membrane pass occupies residues threonine 307–leucine 328. At lysine 329–leucine 347 the chain is on the extracellular side. A helical transmembrane segment spans residues leucine 348–valine 372. Residues serine 373–asparagine 427 lie on the Cytoplasmic side of the membrane. The segment at lysine 408–asparagine 427 is disordered. Over residues asparagine 416–asparagine 427 the composition is skewed to basic and acidic residues. The residue at position 425 (serine 425) is a Phosphoserine.

Belongs to the G-protein coupled receptor 1 family. Endothelin receptor subfamily. EDNRA sub-subfamily. Interacts with HDAC7 and KAT5.

It is found in the cell membrane. Functionally, receptor for endothelin-1. Mediates its action by association with G proteins that activate a phosphatidylinositol-calcium second messenger system. The rank order of binding affinities for ET-A is: ET1 &gt; ET2 &gt;&gt; ET3. The sequence is that of Endothelin-1 receptor from Mus musculus (Mouse).